Consider the following 368-residue polypeptide: Ribosomal RNA large subunit methyltransferase M (368 aa).

Residues Ser-189, 222–225 (CPGG), Asp-241, Asp-261, and Asp-278 each bind S-adenosyl-L-methionine. Lys-307 functions as the Proton acceptor in the catalytic mechanism.

The protein belongs to the class I-like SAM-binding methyltransferase superfamily. RNA methyltransferase RlmE family. RlmM subfamily. Monomer.

It localises to the cytoplasm. The catalysed reaction is cytidine(2498) in 23S rRNA + S-adenosyl-L-methionine = 2'-O-methylcytidine(2498) in 23S rRNA + S-adenosyl-L-homocysteine + H(+). In terms of biological role, catalyzes the 2'-O-methylation at nucleotide C2498 in 23S rRNA. In Yersinia enterocolitica serotype O:8 / biotype 1B (strain NCTC 13174 / 8081), this protein is Ribosomal RNA large subunit methyltransferase M.